Here is a 35-residue protein sequence, read N- to C-terminus: Cecropin-A (35 aa).

Leucine amide is present on Leu35.

Monomer. Hemolymph.

The protein localises to the secreted. Cecropins have lytic and antibacterial activity against several Gram-positive and Gram-negative bacteria. Also has activity against fungi. This is Cecropin-A from Heliothis virescens (Tobacco budworm moth).